The sequence spans 102 residues: NADH-quinone oxidoreductase subunit K (102 aa).

The next 3 helical transmembrane spans lie at 5 to 25, 31 to 51, and 62 to 82; these read LAHY…GIFL, IILL…FVAF, and VFVF…LAIL.

It belongs to the complex I subunit 4L family. In terms of assembly, NDH-1 is composed of 14 different subunits. Subunits NuoA, H, J, K, L, M, N constitute the membrane sector of the complex.

The protein resides in the cell inner membrane. It catalyses the reaction a quinone + NADH + 5 H(+)(in) = a quinol + NAD(+) + 4 H(+)(out). NDH-1 shuttles electrons from NADH, via FMN and iron-sulfur (Fe-S) centers, to quinones in the respiratory chain. The immediate electron acceptor for the enzyme in this species is believed to be ubiquinone. Couples the redox reaction to proton translocation (for every two electrons transferred, four hydrogen ions are translocated across the cytoplasmic membrane), and thus conserves the redox energy in a proton gradient. This Bordetella petrii (strain ATCC BAA-461 / DSM 12804 / CCUG 43448) protein is NADH-quinone oxidoreductase subunit K.